The sequence spans 309 residues: Malate dehydrogenase (309 aa).

Residues 7-12 (GAGHVG) and D32 contribute to the NAD(+) site. R81 and R87 together coordinate substrate. NAD(+) is bound by residues N94 and 117–119 (VSN). Residues N119 and R150 each contribute to the substrate site. Residue H174 is the Proton acceptor of the active site.

The protein belongs to the LDH/MDH superfamily. MDH type 3 family.

It catalyses the reaction (S)-malate + NAD(+) = oxaloacetate + NADH + H(+). Functionally, catalyzes the reversible oxidation of malate to oxaloacetate. In Chlorobium phaeovibrioides (strain DSM 265 / 1930) (Prosthecochloris vibrioformis (strain DSM 265)), this protein is Malate dehydrogenase.